The primary structure comprises 164 residues: uncharacterized protein (164 aa).

The interval 46-142 (GRSPEQKEHV…APDNSIYDTL (97 aa)) is disordered.

This is an uncharacterized protein from Caenorhabditis elegans.